A 407-amino-acid chain; its full sequence is Gonadotropin-releasing hormone receptor (407 aa).

The Extracellular portion of the chain corresponds to 1-36 (MDYLNDSMFNNMTYNITSTPLPDAPRFDNVYVSKLC). N-linked (GlcNAc...) asparagine glycans are attached at residues N5, N11, and N15. Residues 37-57 (VLGTVFVISFFGNTLVIIQIF) form a helical membrane-spanning segment. Residues 58–69 (RIRGSRSTIQSL) are Cytoplasmic-facing. Residues 70-90 (ILNLAIADLMVSFFNILMDII) traverse the membrane as a helical segment. Residues 91 to 105 (WSATVEWLAGNTMCK) lie on the Extracellular side of the membrane. C104 and C183 are joined by a disulfide. The chain crosses the membrane as a helical span at residues 106–126 (IMKYLTVFGLHLSTYITVSIA). Topologically, residues 127 to 147 (LDRCFAILSPMSRSKAPLRVR) are cytoplasmic. A helical transmembrane segment spans residues 148–168 (IMITMAWVLSAIFSIPQAVIF). Residues 169-199 (QEQRKMFRQGMFHQCRDSYNALWQKQLYSAS) lie on the Extracellular side of the membrane. A helical transmembrane segment spans residues 200 to 220 (SLILLFVIPLIIMVTSYLLIL). The Cytoplasmic segment spans residues 221-268 (KTIVKTSRQFHDTPISPTSMSCYSVNHGQIRTHLFERARKRSSRMSAV). The helical transmembrane segment at 269–289 (IVAAFILCWTPYYIIFLGFAF) threads the bilayer. The Extracellular segment spans residues 290–298 (FQWDNSRTV). The chain crosses the membrane as a helical span at residues 299 to 319 (IYFFTLGTSNCMLNPLIYGAF). The Cytoplasmic portion of the chain corresponds to 320–407 (TIYKVHRGRS…NGKMPTKPPG (88 aa)). The interval 377-407 (SLTNPHQPVRPSPGINSTTSPNGKMPTKPPG) is disordered.

It belongs to the G-protein coupled receptor 1 family. In terms of tissue distribution, widely expressed in peripheral nervous tissue, gonadal tissue and brain. In the brain, expression is high in the palliovisceral lobe and superior buccal lobe but low in the subvertical lobe, superior and inferior frontal lobe, posterior brachial lobe and pedal lobe. Expressed in stomach, rectum, aorta, heart, salivary gland, branchia, pancreas, radula retractor muscle, branchial vessel but not in white body, esophagus, liver and kidney.

The protein resides in the cell membrane. Receptor for gonadotropin releasing hormone (GnRH) that mediates the action of GnRH to stimulate the secretion of the gonadotropic hormones luteinizing hormone (LH) and follicle-stimulating hormone (FSH). This receptor mediates its action by association with G-proteins that activate a phosphatidylinositol-calcium second messenger system. Ligand interaction triggers steroidogenesis in spermatozoa and follicles. Appears to be involved in contraction of the radula retractor muscle. The chain is Gonadotropin-releasing hormone receptor from Octopus vulgaris (Common octopus).